We begin with the raw amino-acid sequence, 365 residues long: S-adenosylmethionine:tRNA ribosyltransferase-isomerase (365 aa).

The protein belongs to the QueA family. Monomer.

It is found in the cytoplasm. The enzyme catalyses 7-aminomethyl-7-carbaguanosine(34) in tRNA + S-adenosyl-L-methionine = epoxyqueuosine(34) in tRNA + adenine + L-methionine + 2 H(+). It participates in tRNA modification; tRNA-queuosine biosynthesis. Functionally, transfers and isomerizes the ribose moiety from AdoMet to the 7-aminomethyl group of 7-deazaguanine (preQ1-tRNA) to give epoxyqueuosine (oQ-tRNA). The polypeptide is S-adenosylmethionine:tRNA ribosyltransferase-isomerase (Helicobacter hepaticus (strain ATCC 51449 / 3B1)).